We begin with the raw amino-acid sequence, 388 residues long: Quinolone resistance protein NorA (388 aa).

The next 12 helical transmembrane spans lie at 5–25, 42–62, 69–89, 99–119, 129–149, 157–177, 201–221, 239–259, 269–289, 293–313, 331–351, and 355–375; these read IFVLYFNIFLIFLGIGLVIPV, LLVAAFALSQMIISPFGGTLA, LIICIGLILFSVSEFMFAVGH, VIGGMSAGMVMPGVTGLIADV, FGYMSAIINSGFILGPGIGGF, MPFYFAGALGILAFIMSVVLI, WKVFITPAILTLVLAFGLSAF, DISIAITGGGIFGALFQIYFF, LTFIAWSLIYSVIVLVLLVIA, WTIMVISFAVFIGFDMIRPAI, LNSTFTSMGNFIGPLIAGALF, and IEAPIYMAIGVSLAGVVIVLI.

It belongs to the major facilitator superfamily. TCR/Tet family.

It is found in the cell membrane. Its function is as follows. Involved in quinolone resistance. May constitute a membrane-associated active efflux pump of hydrophilic quinolones. The sequence is that of Quinolone resistance protein NorA (norA) from Staphylococcus aureus (strain MRSA252).